We begin with the raw amino-acid sequence, 317 residues long: Large ribosomal subunit protein uL10 (317 aa).

It belongs to the universal ribosomal protein uL10 family. P0 forms a pentameric complex by interaction with dimers of P1 and P2. Phosphorylated.

In terms of biological role, ribosomal protein P0 is the functional equivalent of E.coli protein L10. The polypeptide is Large ribosomal subunit protein uL10 (rplp0) (Ictalurus punctatus (Channel catfish)).